The following is a 343-amino-acid chain: Glycogen biosynthesis protein GlgD (343 aa).

The protein belongs to the bacterial/plant glucose-1-phosphate adenylyltransferase family.

Required for the synthesis of glycogen. The polypeptide is Glycogen biosynthesis protein GlgD (glgD) (Bacillus subtilis (strain 168)).